The chain runs to 321 residues: Lipoyl synthase (321 aa).

Residues cysteine 68, cysteine 73, cysteine 79, cysteine 94, cysteine 98, cysteine 101, and serine 308 each contribute to the [4Fe-4S] cluster site. Residues 80–297 enclose the Radical SAM core domain; sequence FNHGTATFMI…KALADELGFT (218 aa).

Belongs to the radical SAM superfamily. Lipoyl synthase family. [4Fe-4S] cluster is required as a cofactor.

The protein localises to the cytoplasm. It catalyses the reaction [[Fe-S] cluster scaffold protein carrying a second [4Fe-4S](2+) cluster] + N(6)-octanoyl-L-lysyl-[protein] + 2 oxidized [2Fe-2S]-[ferredoxin] + 2 S-adenosyl-L-methionine + 4 H(+) = [[Fe-S] cluster scaffold protein] + N(6)-[(R)-dihydrolipoyl]-L-lysyl-[protein] + 4 Fe(3+) + 2 hydrogen sulfide + 2 5'-deoxyadenosine + 2 L-methionine + 2 reduced [2Fe-2S]-[ferredoxin]. The protein operates within protein modification; protein lipoylation via endogenous pathway; protein N(6)-(lipoyl)lysine from octanoyl-[acyl-carrier-protein]: step 2/2. In terms of biological role, catalyzes the radical-mediated insertion of two sulfur atoms into the C-6 and C-8 positions of the octanoyl moiety bound to the lipoyl domains of lipoate-dependent enzymes, thereby converting the octanoylated domains into lipoylated derivatives. The protein is Lipoyl synthase of Shewanella putrefaciens (strain CN-32 / ATCC BAA-453).